Reading from the N-terminus, the 246-residue chain is Caffeoyl-CoA O-methyltransferase 1 (246 aa).

Lysine 21 serves as a coordination point for substrate. Residues threonine 63, glutamate 85, 87–88 (GV), serine 93, aspartate 111, and alanine 140 contribute to the S-adenosyl-L-methionine site. Aspartate 162 provides a ligand contact to substrate. A divalent metal cation is bound at residue aspartate 162. Residue aspartate 164 coordinates S-adenosyl-L-methionine. Residues aspartate 188 and asparagine 189 each contribute to the a divalent metal cation site. Asparagine 193 contributes to the substrate binding site.

The protein belongs to the class I-like SAM-binding methyltransferase superfamily. Cation-dependent O-methyltransferase family. CCoAMT subfamily. It depends on a divalent metal cation as a cofactor.

The catalysed reaction is (E)-caffeoyl-CoA + S-adenosyl-L-methionine = (E)-feruloyl-CoA + S-adenosyl-L-homocysteine + H(+). Its pathway is aromatic compound metabolism; phenylpropanoid biosynthesis. Functionally, methylates caffeoyl-CoA to feruloyl-CoA and 5-hydroxyferuloyl-CoA to sinapoyl-CoA. Plays a role in the synthesis of feruloylated polysaccharides. Involved in the reinforcement of the plant cell wall. Also involved in the responding to wounding or pathogen challenge by the increased formation of cell wall-bound ferulic acid polymers. The protein is Caffeoyl-CoA O-methyltransferase 1 (CCOMT) of Eucalyptus globulus (Tasmanian blue gum).